The following is a 519-amino-acid chain: Cytochrome P450 52A12 (519 aa).

Position 467 (C467) interacts with heme.

This sequence belongs to the cytochrome P450 family. It depends on heme as a cofactor.

It is found in the membrane. Its function is as follows. Together with an NADPH cytochrome P450 the enzyme system catalyzes the terminal hydroxylation as the first step in the assimilation of alkanes and fatty acids. This Debaryomyces hansenii (Yeast) protein is Cytochrome P450 52A12 (CYP52A12).